Reading from the N-terminus, the 202-residue chain is Holliday junction resolvase RecU (202 aa).

4 residues coordinate Mg(2+): threonine 85, aspartate 87, glutamate 100, and glutamine 119.

This sequence belongs to the RecU family. Mg(2+) serves as cofactor.

It localises to the cytoplasm. The catalysed reaction is Endonucleolytic cleavage at a junction such as a reciprocal single-stranded crossover between two homologous DNA duplexes (Holliday junction).. Functionally, endonuclease that resolves Holliday junction intermediates in genetic recombination. Cleaves mobile four-strand junctions by introducing symmetrical nicks in paired strands. Promotes annealing of linear ssDNA with homologous dsDNA. Required for DNA repair, homologous recombination and chromosome segregation. The sequence is that of Holliday junction resolvase RecU from Streptococcus pyogenes serotype M5 (strain Manfredo).